Consider the following 204-residue polypeptide: Large ribosomal subunit protein uL22c (204 aa).

It belongs to the universal ribosomal protein uL22 family. Part of the 50S ribosomal subunit.

The protein localises to the plastid. It is found in the chloroplast. In terms of biological role, this protein binds specifically to 23S rRNA. Its function is as follows. The globular domain of the protein is located near the polypeptide exit tunnel on the outside of the subunit, while an extended beta-hairpin is found that lines the wall of the exit tunnel in the center of the 70S ribosome. This is Large ribosomal subunit protein uL22c (rpl22) from Pisum sativum (Garden pea).